A 227-amino-acid polypeptide reads, in one-letter code: CDP-diacylglycerol--glycerol-3-phosphate 3-phosphatidyltransferase (227 aa).

5 consecutive transmembrane segments (helical) span residues 30-50 (IFIA…GSVA), 58-78 (VTIH…TAVI), 112-132 (VLIA…VIVL), 159-179 (WKTT…SFSL), and 192-212 (WAIV…SFGI).

This sequence belongs to the CDP-alcohol phosphatidyltransferase class-I family.

It is found in the cell membrane. It carries out the reaction a CDP-1,2-diacyl-sn-glycerol + sn-glycerol 3-phosphate = a 1,2-diacyl-sn-glycero-3-phospho-(1'-sn-glycero-3'-phosphate) + CMP + H(+). It participates in phospholipid metabolism; phosphatidylglycerol biosynthesis; phosphatidylglycerol from CDP-diacylglycerol: step 1/2. In terms of biological role, this protein catalyzes the committed step to the synthesis of the acidic phospholipids. This Mycoplasma pneumoniae (strain ATCC 29342 / M129 / Subtype 1) (Mycoplasmoides pneumoniae) protein is CDP-diacylglycerol--glycerol-3-phosphate 3-phosphatidyltransferase (pgsA).